A 282-amino-acid chain; its full sequence is MASTAKILVTNDDGIHSPGLRLLYEAVKELGRVYVLAPETPKSASGLGITLHKPLRIGKVKIWGDTMVYITNGTPSDVIYIAIEEFSPRFDVVVSGVNIGDNTSIQVILSSGTIGAAAQAALLGIPGIAFSADIDEASQLEEDRETWENMKRVIRAITSWVLEHGMPEGVDLISVNFPRKVRKDTKVKIAPAARIKFLQKVSVLYDPRGRKYYWLYGTLVEPEPGSDVYVVHVEKAIAITPLSLNVNVKEGEWAAVVENIKPMIQAAESALRAQTSATVSTA.

A divalent metal cation-binding residues include D12, D13, S43, and N98.

Belongs to the SurE nucleotidase family. The cofactor is a divalent metal cation.

It is found in the cytoplasm. It carries out the reaction a ribonucleoside 5'-phosphate + H2O = a ribonucleoside + phosphate. Its function is as follows. Nucleotidase that shows phosphatase activity on nucleoside 5'-monophosphates. The polypeptide is 5'-nucleotidase SurE (Hyperthermus butylicus (strain DSM 5456 / JCM 9403 / PLM1-5)).